A 345-amino-acid polypeptide reads, in one-letter code: Aurora kinase B (345 aa).

Residues Met-1–Ser-25 are disordered. The segment covering Ser-14–Ser-25 has biased composition (polar residues). At Thr-35 the chain carries Phosphothreonine. The tract at residues Thr-50–Phe-77 is disordered. The segment covering Asn-60–Phe-77 has biased composition (polar residues). Ser-62 bears the Phosphoserine mark. Residues Phe-82 to Val-332 enclose the Protein kinase domain. Residues Leu-88–Val-96 and Lys-111 each bind ATP. Asp-205 serves as the catalytic Proton acceptor. Lys-220 carries the N6-acetyllysine modification. Ser-232 carries the phosphoserine modification. Thr-237 carries the phosphothreonine; by autocatalysis modification.

This sequence belongs to the protein kinase superfamily. Ser/Thr protein kinase family. Aurora subfamily. As to quaternary structure, component of the chromosomal passenger complex (CPC) composed of at least BIRC5/survivin, CDCA8/borealin, INCENP, AURKB or AURKC; predominantly independent AURKB- and AURKC-containing complexes exist. Associates with RACGAP1 during M phase. Interacts with SPDYC; this interaction may be required for proper localization of active, Thr-237-phosphorylated AURKB form during prometaphase and metaphase. Interacts with p53/TP53. Interacts (via the middle kinase domain) with NOC2L (via the N- and C-terminus domains). Interacts with CDCA1. Interacts with EVI5. Interacts with JTB. Interacts with NDC80. Interacts with PSMA3. Interacts with RNF2/RING1B. Interacts with SEPTIN1. Interacts with SIRT2. Interacts with TACC1. Interacts with TTC28. In terms of processing, the phosphorylation of Thr-237 requires the binding to INCENP and occurs by means of an autophosphorylation mechanism. Thr-237 phosphorylation is indispensable for the AURKB kinase activity. Acetylated at Lys-220 by KAT5 at kinetochores, increasing AURKB activity and promoting accurate chromosome segregation in mitosis. Post-translationally, ubiquitinated by different BCR (BTB-CUL3-RBX1) E3 ubiquitin ligase complexes. Ubiquitinated by the BCR(KLHL9-KLHL13) E3 ubiquitin ligase complex, ubiquitination leads to removal from mitotic chromosomes and is required for cytokinesis. During anaphase, the BCR(KLHL21) E3 ubiquitin ligase complex recruits the CPC complex from chromosomes to the spindle midzone and mediates the ubiquitination of AURKB. Ubiquitination of AURKB by BCR(KLHL21) E3 ubiquitin ligase complex may not lead to its degradation by the proteasome. Deubiquitinated by USP35; inhibiting CDH1-mediated degradation of AURKB. Expressed in testis, intestine and spleen. All of them are tissues that contain a large number of proliferating cells. Expressed during S phase, in a cell-cycle-dependent fashion.

Its subcellular location is the nucleus. It localises to the chromosome. The protein resides in the centromere. The protein localises to the kinetochore. It is found in the cytoplasm. Its subcellular location is the cytoskeleton. It localises to the spindle. The protein resides in the midbody. It catalyses the reaction L-seryl-[protein] + ATP = O-phospho-L-seryl-[protein] + ADP + H(+). It carries out the reaction L-threonyl-[protein] + ATP = O-phospho-L-threonyl-[protein] + ADP + H(+). Its activity is regulated as follows. Activity is greatly increased when AURKB is within the CPC complex. In particular, AURKB-phosphorylated INCENP acts as an activator of AURKB. Positive feedback between HASPIN and AURKB contributes to CPC localization. Functionally, serine/threonine-protein kinase component of the chromosomal passenger complex (CPC), a complex that acts as a key regulator of mitosis. The CPC complex has essential functions at the centromere in ensuring correct chromosome alignment and segregation and is required for chromatin-induced microtubule stabilization and spindle assembly. Involved in the bipolar attachment of spindle microtubules to kinetochores and is a key regulator for the onset of cytokinesis during mitosis. Required for central/midzone spindle assembly and cleavage furrow formation. Key component of the cytokinesis checkpoint, a process required to delay abscission to prevent both premature resolution of intercellular chromosome bridges and accumulation of DNA damage: phosphorylates CHMP4C, leading to retain abscission-competent VPS4 (VPS4A and/or VPS4B) at the midbody ring until abscission checkpoint signaling is terminated at late cytokinesis. AURKB phosphorylates the CPC complex subunits BIRC5/survivin, CDCA8/borealin and INCENP. Phosphorylation of INCENP leads to increased AURKB activity. Other known AURKB substrates involved in centromeric functions and mitosis are CENPA, DES/desmin, GPAF, KIF2C, NSUN2, RACGAP1, SEPTIN1, VIM/vimentin, HASPIN, and histone H3. A positive feedback loop involving HASPIN and AURKB contributes to localization of CPC to centromeres. Phosphorylation of VIM controls vimentin filament segregation in cytokinetic process, whereas histone H3 is phosphorylated at 'Ser-10' and 'Ser-28' during mitosis (H3S10ph and H3S28ph, respectively). AURKB is also required for kinetochore localization of BUB1 and SGO1. Phosphorylation of p53/TP53 negatively regulates its transcriptional activity. Key regulator of active promoters in resting B- and T-lymphocytes: acts by mediating phosphorylation of H3S28ph at active promoters in resting B-cells, inhibiting RNF2/RING1B-mediated ubiquitination of histone H2A and enhancing binding and activity of the USP16 deubiquitinase at transcribed genes. Acts as an inhibitor of CGAS during mitosis: catalyzes phosphorylation of the N-terminus of CGAS during the G2-M transition, blocking CGAS liquid phase separation and activation, and thereby preventing CGAS-induced autoimmunity. Phosphorylates KRT5 during anaphase and telophase. Phosphorylates ATXN10 which promotes phosphorylation of ATXN10 by PLK1 and may play a role in the regulation of cytokinesis and stimulating the proteasomal degradation of ATXN10. The sequence is that of Aurora kinase B (Aurkb) from Mus musculus (Mouse).